A 322-amino-acid polypeptide reads, in one-letter code: Homoserine kinase (322 aa).

ATP is bound at residue A106 to A116.

This sequence belongs to the GHMP kinase family. Homoserine kinase subfamily.

The protein resides in the cytoplasm. The enzyme catalyses L-homoserine + ATP = O-phospho-L-homoserine + ADP + H(+). Its pathway is amino-acid biosynthesis; L-threonine biosynthesis; L-threonine from L-aspartate: step 4/5. Functionally, catalyzes the ATP-dependent phosphorylation of L-homoserine to L-homoserine phosphate. The sequence is that of Homoserine kinase from Xanthomonas campestris pv. campestris (strain B100).